The chain runs to 116 residues: Acyl-CoA-binding protein homolog 3 (116 aa).

The 90-residue stretch at Leu-3–Glu-92 folds into the ACB domain. An acyl-CoA-binding positions include Tyr-34–Lys-38, Lys-60, and Tyr-79.

The protein belongs to the ACBP family.

Its function is as follows. Binds medium- and long-chain acyl-CoA esters with very high affinity and may function as an intracellular carrier of acyl-CoA esters. The protein is Acyl-CoA-binding protein homolog 3 (acbp-3) of Caenorhabditis elegans.